We begin with the raw amino-acid sequence, 425 residues long: Glutamyl-tRNA reductase (425 aa).

Residues T49–R52, S107, E112–Q114, and Q118 contribute to the substrate site. The active-site Nucleophile is the C50. Residue G187 to I192 participates in NADP(+) binding.

This sequence belongs to the glutamyl-tRNA reductase family. Homodimer.

It catalyses the reaction (S)-4-amino-5-oxopentanoate + tRNA(Glu) + NADP(+) = L-glutamyl-tRNA(Glu) + NADPH + H(+). It functions in the pathway porphyrin-containing compound metabolism; protoporphyrin-IX biosynthesis; 5-aminolevulinate from L-glutamyl-tRNA(Glu): step 1/2. Functionally, catalyzes the NADPH-dependent reduction of glutamyl-tRNA(Glu) to glutamate 1-semialdehyde (GSA). This is Glutamyl-tRNA reductase from Pseudomonas syringae pv. tomato (strain ATCC BAA-871 / DC3000).